The primary structure comprises 116 residues: Protein SPIRAL1-like 1 (116 aa).

A compositionally biased stretch (gly residues) spans 1 to 12 (MSRGGSAGGGQS). Positions 1 to 116 (MSRGGSAGGG…SSLGYLFGGN (116 aa)) are disordered. Residues 27–43 (AAKPAPAAAPAPAPAPA) show a composition bias toward pro residues. Residues 44–60 (PAAAVAAPAEKPSPAKA) are compositionally biased toward low complexity. The segment covering 72 to 90 (GSRSNNNYHRADGQNTGNF) has biased composition (polar residues). Over residues 103-116 (PGGGSSLGYLFGGN) the composition is skewed to gly residues.

Belongs to the SPIRAL1 family.

Its function is as follows. Acts in maintaining the cortical microtubules organization essential for anisotropic cell growth. The polypeptide is Protein SPIRAL1-like 1 (Oryza sativa subsp. japonica (Rice)).